The following is a 795-amino-acid chain: RINT1-like protein MAG2 (795 aa).

Positions 35 to 64 (TGLVSELQTEISELDQRLAGLNRQLESGLA) form a coiled coil. The segment at 91–111 (TSVTRSASDSGKEEEATEHVA) is disordered. Positions 100-111 (SGKEEEATEHVA) are enriched in basic and acidic residues. The RINT1/TIP20 domain occupies 207–795 (ALAMMRPQAI…KKVAKSRVFS (589 aa)).

Belongs to the RINT1 family. As to quaternary structure, interacts with SEC20 and SYP81. Interacts with ZW10 (via the central region). Forms a complex with ZW10/MIP1, MIP2 and MIP3 on the endoplasmic reticulum. As to expression, highly expressed in dry seeds. Expressed at low levels in roots, rosette and cauline leaves, stems and flowers.

The protein localises to the endoplasmic reticulum membrane. Functionally, functions in the anterograde transport of storage protein precursors from the endoplasmic reticulum (ER) to the Golgi complex and in the retrograde transport from the Golgi complex to the ER. Forms a complex with ZW10/MIP1, MIP2 and MIP3 on the ER that may be responsible for efficient transport of seed storage proteins. Required for the responses to environmental stresses during seed germination and vegetative growth. Probably not involved in the retrograde transport from the ER to the apoplast. The protein is RINT1-like protein MAG2 of Arabidopsis thaliana (Mouse-ear cress).